The chain runs to 515 residues: E3 ubiquitin-protein ligase RNF38 (515 aa).

A Bipartite nuclear localization signal 1 motif is present at residues 57 to 71 (DSPSPKRQRLSHSVF). Positions 73–141 (YTSASPAPSP…LSRHNSISQD (69 aa)) are disordered. Residues 89–104 (MTSNRQPPSVRPSQHH) are compositionally biased toward polar residues. The short motif at 115–131 (RNRRSPPVRRQRGRRDR) is the Bipartite nuclear localization signal 2 element. A compositionally biased stretch (basic residues) spans 115–134 (RNRRSPPVRRQRGRRDRLSR). The RING-type zinc-finger motif lies at 463–504 (CVVCMCDFESRQLLRVLPCNHEFHAKCVDKWLKANRTCPICR).

Widely expressed with highest levels in testis.

It localises to the nucleus. The catalysed reaction is S-ubiquitinyl-[E2 ubiquitin-conjugating enzyme]-L-cysteine + [acceptor protein]-L-lysine = [E2 ubiquitin-conjugating enzyme]-L-cysteine + N(6)-ubiquitinyl-[acceptor protein]-L-lysine.. It participates in protein modification; protein ubiquitination. Acts as an E3 ubiquitin-protein ligase able to ubiquitinate p53/TP53 which promotes its relocalization to discrete foci associated with PML nuclear bodies. Exhibits preference for UBE2D2 as a E2 enzyme. The polypeptide is E3 ubiquitin-protein ligase RNF38 (Homo sapiens (Human)).